Reading from the N-terminus, the 165-residue chain is SsrA-binding protein (165 aa).

Positions Glu-141–Arg-165 are disordered.

This sequence belongs to the SmpB family.

The protein localises to the cytoplasm. In terms of biological role, required for rescue of stalled ribosomes mediated by trans-translation. Binds to transfer-messenger RNA (tmRNA), required for stable association of tmRNA with ribosomes. tmRNA and SmpB together mimic tRNA shape, replacing the anticodon stem-loop with SmpB. tmRNA is encoded by the ssrA gene; the 2 termini fold to resemble tRNA(Ala) and it encodes a 'tag peptide', a short internal open reading frame. During trans-translation Ala-aminoacylated tmRNA acts like a tRNA, entering the A-site of stalled ribosomes, displacing the stalled mRNA. The ribosome then switches to translate the ORF on the tmRNA; the nascent peptide is terminated with the 'tag peptide' encoded by the tmRNA and targeted for degradation. The ribosome is freed to recommence translation, which seems to be the essential function of trans-translation. The polypeptide is SsrA-binding protein (Anaeromyxobacter sp. (strain Fw109-5)).